Consider the following 475-residue polypeptide: ATP synthase subunit beta (475 aa).

152–159 (GGAGVGKT) provides a ligand contact to ATP.

It belongs to the ATPase alpha/beta chains family. As to quaternary structure, F-type ATPases have 2 components, CF(1) - the catalytic core - and CF(0) - the membrane proton channel. CF(1) has five subunits: alpha(3), beta(3), gamma(1), delta(1), epsilon(1). CF(0) has three main subunits: a(1), b(2) and c(9-12). The alpha and beta chains form an alternating ring which encloses part of the gamma chain. CF(1) is attached to CF(0) by a central stalk formed by the gamma and epsilon chains, while a peripheral stalk is formed by the delta and b chains.

The protein resides in the cell membrane. The enzyme catalyses ATP + H2O + 4 H(+)(in) = ADP + phosphate + 5 H(+)(out). Its function is as follows. Produces ATP from ADP in the presence of a proton gradient across the membrane. The catalytic sites are hosted primarily by the beta subunits. The sequence is that of ATP synthase subunit beta from Wolbachia pipientis wMel.